The sequence spans 84 residues: Metallothionein-like protein 2C (84 aa).

It belongs to the metallothionein superfamily. Type 15 family.

It is found in the cytoplasm. Its subcellular location is the cytosol. Its function is as follows. Metallothioneins have a high content of cysteine residues that bind various heavy metals. Acts as a reactive oxygen species (ROS) scavenger in the cytosol. Possesses superoxide anion and hydroxyl radical scavenging activities in vitro. Plays a role during root development, lateral root initiation and seed embryo germination, possibly by regulating levels of cytokinin. In Oryza sativa subsp. indica (Rice), this protein is Metallothionein-like protein 2C (MT2C).